The following is a 291-amino-acid chain: Acetylglutamate kinase (291 aa).

Substrate contacts are provided by residues 64-65 (GG), Arg-86, and Asn-190.

Belongs to the acetylglutamate kinase family. ArgB subfamily.

Its subcellular location is the cytoplasm. It catalyses the reaction N-acetyl-L-glutamate + ATP = N-acetyl-L-glutamyl 5-phosphate + ADP. The protein operates within amino-acid biosynthesis; L-arginine biosynthesis; N(2)-acetyl-L-ornithine from L-glutamate: step 2/4. Functionally, catalyzes the ATP-dependent phosphorylation of N-acetyl-L-glutamate. The sequence is that of Acetylglutamate kinase from Leptospira borgpetersenii serovar Hardjo-bovis (strain JB197).